The primary structure comprises 322 residues: uncharacterized protein (322 aa).

The first 27 residues, 1–27 (MKRLFWNLKHKKAWLVLLLGTGMILSS), serve as a signal peptide directing secretion. Cysteine 28 carries N-palmitoyl cysteine lipidation. Residue cysteine 28 is the site of S-diacylglycerol cysteine attachment. Residues 235–254 (DNSTNPNAPGSGQGDSTPPA) show a composition bias toward polar residues. The interval 235 to 298 (DNSTNPNAPG…AVQRSQKSYG (64 aa)) is disordered. A compositionally biased stretch (gly residues) spans 257–267 (GEGGGSDGSSG). A compositionally biased stretch (polar residues) spans 274-296 (NGQNTTPTSPQSSQPAVQRSQKS).

It is found in the cell membrane. This is an uncharacterized protein from Mycoplasma genitalium (strain ATCC 33530 / DSM 19775 / NCTC 10195 / G37) (Mycoplasmoides genitalium).